The following is a 190-amino-acid chain: Superoxide dismutase [Cu-Zn] (190 aa).

The N-terminal stretch at 1-23 (MKLTNLALAFTLFGASAVAFAHA) is a signal peptide. 3 residues coordinate Cu cation: histidine 83, histidine 85, and histidine 108. The cysteines at positions 90 and 186 are disulfide-linked. Histidine 108, histidine 117, histidine 126, and aspartate 129 together coordinate Zn(2+). The segment at 162–181 (MIHEGGDNHSDHPAPLGGGG) is disordered. Histidine 164 is a Cu cation binding site.

This sequence belongs to the Cu-Zn superoxide dismutase family. As to quaternary structure, homodimer. It depends on Cu cation as a cofactor. Zn(2+) serves as cofactor.

It localises to the periplasm. The catalysed reaction is 2 superoxide + 2 H(+) = H2O2 + O2. Functionally, destroys radicals which are normally produced within the cells and which are toxic to biological systems. This Actinobacillus pleuropneumoniae (Haemophilus pleuropneumoniae) protein is Superoxide dismutase [Cu-Zn] (sodC).